Consider the following 291-residue polypeptide: HTH-type transcriptional regulator CitR (291 aa).

One can recognise an HTH lysR-type domain in the interval 1 to 58 (MDFKWLHTFVTAAKYENFRKTAETLFLSQPTVTVHIKQLEKEISCKLFERKGRQIQLT). A DNA-binding region (H-T-H motif) is located at residues 18-37 (FRKTAETLFLSQPTVTVHIK).

Belongs to the LysR transcriptional regulatory family.

Its subcellular location is the cytoplasm. Negative regulatory protein for the citA gene for citrate synthase I. The polypeptide is HTH-type transcriptional regulator CitR (citR) (Bacillus subtilis (strain 168)).